The primary structure comprises 517 residues: GMP synthase [glutamine-hydrolyzing] (517 aa).

A Glutamine amidotransferase type-1 domain is found at 9–199; the sequence is RILILDFGSQ…VLNACGCEGL (191 aa). Cys-86 acts as the Nucleophile in catalysis. Catalysis depends on residues His-173 and Glu-175. Residues 200 to 392 enclose the GMPS ATP-PPase domain; it reads WTSASIIEDA…LGLPYNMLYR (193 aa). 227–233 is an ATP binding site; it reads SGGVDSS.

In terms of assembly, homodimer.

It catalyses the reaction XMP + L-glutamine + ATP + H2O = GMP + L-glutamate + AMP + diphosphate + 2 H(+). It functions in the pathway purine metabolism; GMP biosynthesis; GMP from XMP (L-Gln route): step 1/1. In terms of biological role, catalyzes the synthesis of GMP from XMP. The protein is GMP synthase [glutamine-hydrolyzing] of Vibrio atlanticus (strain LGP32) (Vibrio splendidus (strain Mel32)).